The chain runs to 119 residues: Large ribosomal subunit protein uL18 (119 aa).

This sequence belongs to the universal ribosomal protein uL18 family. As to quaternary structure, part of the 50S ribosomal subunit; part of the 5S rRNA/L5/L18/L25 subcomplex. Contacts the 5S and 23S rRNAs.

This is one of the proteins that bind and probably mediate the attachment of the 5S RNA into the large ribosomal subunit, where it forms part of the central protuberance. This chain is Large ribosomal subunit protein uL18, found in Clostridium botulinum (strain Alaska E43 / Type E3).